Reading from the N-terminus, the 542-residue chain is Beta-amylase 2, chloroplastic (542 aa).

The transit peptide at 1 to 55 directs the protein to the chloroplast; the sequence is MAIRLNHSVIPVSVKLGAPTRVSARSSLPFSVGDWRGVSTFSGARPLVLAKVKLR. Residues Asp-136, His-176, and Asp-184 each contribute to the substrate site. The active-site Proton donor is the Glu-269. 3 residues coordinate substrate: Lys-377, His-382, and Thr-424. Catalysis depends on Glu-465, which acts as the Proton acceptor. Substrate-binding positions include 466–467 and Arg-501; that span reads NA.

The protein belongs to the glycosyl hydrolase 14 family.

It is found in the plastid. The protein localises to the chloroplast. It catalyses the reaction Hydrolysis of (1-&gt;4)-alpha-D-glucosidic linkages in polysaccharides so as to remove successive maltose units from the non-reducing ends of the chains.. With respect to regulation, redox regulation; active in reducing conditions, inactive in oxidizing conditions. Functionally, low beta-amylase activity. Interacts poorly with starch or other alpha-1,4-glucan. The protein is Beta-amylase 2, chloroplastic (BAM2) of Arabidopsis thaliana (Mouse-ear cress).